A 1088-amino-acid polypeptide reads, in one-letter code: RNA-directed RNA polymerase (1088 aa).

The RdRp catalytic domain occupies 501–687; sequence LSYGDVTRFL…AKRYIAGGKI (187 aa).

This sequence belongs to the reoviridae RNA-directed RNA polymerase family. In terms of assembly, interacts with VP3 (Potential). Interacts with VP2; this interaction activates VP1. Interacts with NSP5; this interaction is probably necessary for the formation of functional virus factories. Interacts with NSP2; this interaction is weak. Requires Mg(2+) as cofactor.

Its subcellular location is the virion. It catalyses the reaction RNA(n) + a ribonucleoside 5'-triphosphate = RNA(n+1) + diphosphate. RNA-directed RNA polymerase that is involved in both transcription and genome replication. Together with VP3 capping enzyme, forms an enzyme complex positioned near the channels situated at each of the five-fold vertices of the core. Following infection, the outermost layer of the virus is lost, leaving a double-layered particle (DLP) made up of the core and VP6 shell. VP1 then catalyzes the transcription of fully conservative plus-strand genomic RNAs that are extruded through the DLP's channels into the cytoplasm where they function as mRNAs for translation of viral proteins. One copy of each of the viral (+)RNAs is also recruited during core assembly, together with newly synthesized polymerase complexes and VP2. The polymerase of these novo-formed particles catalyzes the synthesis of complementary minus-strands leading to dsRNA formation. To do so, the polymerase specifically recognizes and binds 4 bases 5'-UGUG-3' in the conserved 3'-sequence of plus-strand RNA templates. VP2 presumably activates the autoinhibited VP1-RNA complex to coordinate packaging and genome replication. Once dsRNA synthesis is complete, the polymerase switches to the transcriptional mode, thus providing secondary transcription. The sequence is that of RNA-directed RNA polymerase from Rotavirus A (isolate RVA/Human/United States/WI61/1983/G9P1A[8]) (RV-A).